A 360-amino-acid polypeptide reads, in one-letter code: Phosphoserine aminotransferase (360 aa).

Position 41 (Arg41) interacts with L-glutamate. Pyridoxal 5'-phosphate contacts are provided by residues Gly75–Arg76, Trp101, Thr152, Asp172, and Gln195. Lys196 carries the post-translational modification N6-(pyridoxal phosphate)lysine. Residue Asn237–Thr238 coordinates pyridoxal 5'-phosphate.

This sequence belongs to the class-V pyridoxal-phosphate-dependent aminotransferase family. SerC subfamily. Homodimer. Requires pyridoxal 5'-phosphate as cofactor.

Its subcellular location is the cytoplasm. It catalyses the reaction O-phospho-L-serine + 2-oxoglutarate = 3-phosphooxypyruvate + L-glutamate. The enzyme catalyses 4-(phosphooxy)-L-threonine + 2-oxoglutarate = (R)-3-hydroxy-2-oxo-4-phosphooxybutanoate + L-glutamate. It participates in amino-acid biosynthesis; L-serine biosynthesis; L-serine from 3-phospho-D-glycerate: step 2/3. Its pathway is cofactor biosynthesis; pyridoxine 5'-phosphate biosynthesis; pyridoxine 5'-phosphate from D-erythrose 4-phosphate: step 3/5. Catalyzes the reversible conversion of 3-phosphohydroxypyruvate to phosphoserine and of 3-hydroxy-2-oxo-4-phosphonooxybutanoate to phosphohydroxythreonine. This Pseudoalteromonas translucida (strain TAC 125) protein is Phosphoserine aminotransferase.